The following is a 156-amino-acid chain: Putative thymidylate kinase (156 aa).

7-14 contributes to the ATP binding site; that stretch reads GLDGTGKT.

The protein belongs to the thymidylate kinase family.

It catalyses the reaction dTMP + ATP = dTDP + ADP. It functions in the pathway pyrimidine metabolism; dTTP biosynthesis. Its function is as follows. Catalyzes the conversion of dTMP to dTDP. The protein is Putative thymidylate kinase of Acidianus convivator (ABV).